Reading from the N-terminus, the 329-residue chain is G-protein coupled bile acid receptor 1 (329 aa).

Residues 1–15 (MMTPNSTELSAIPMG) lie on the Extracellular side of the membrane. The N-linked (GlcNAc...) asparagine glycan is linked to Asn-5. Residues 16–36 (VLGLSLALASLIVIANLLLAL) form a helical membrane-spanning segment. Residues 37–49 (GIALDRHLRSPPA) are Cytoplasmic-facing. Residues 50–70 (GCFFLSLLLAGLLTGLALPML) traverse the membrane as a helical segment. The Extracellular portion of the chain corresponds to 71–84 (PGLWSRNHQGYWSC). Cys-84 and Cys-154 form a disulfide bridge. Residues 85 to 105 (LLLHLTPNFCFLSLLANLLLV) traverse the membrane as a helical segment. The Cytoplasmic segment spans residues 106–124 (HGERYMAVLQPLRPHGSVR). The chain crosses the membrane as a helical span at residues 125–145 (LALFLTWVSSLFFASLPALGW). Over 146-164 (NHWSPDANCSSQAVFPAPY) the chain is Extracellular. Residue Asn-153 is glycosylated (N-linked (GlcNAc...) asparagine). The chain crosses the membrane as a helical span at residues 165–185 (LYLEVYGLLLPAVGATALLSV). Over 186–229 (RVLATAHRQLCEIRRLERAVCRDVPSTLARALTWRQARAQAGAT) the chain is Cytoplasmic. The chain crosses the membrane as a helical span at residues 230–250 (LLFLLCWGPYVATLLLSVLAY). Topologically, residues 251–260 (ERRPPLGPGT) are extracellular. Residues 261-281 (LLSLISLGSTSAAAVPVAMGL) form a helical membrane-spanning segment. At 282–329 (GDQRYTAPWRTAAQRCLRVLRGRAKRDNPGPSTAYHTSSQCSIDLDLN) the chain is on the cytoplasmic side.

It belongs to the G-protein coupled receptor 1 family.

The protein localises to the cell membrane. Functionally, receptor for bile acid. Bile acid-binding induces its internalization, activation of extracellular signal-regulated kinase and intracellular cAMP production. May be involved in the suppression of macrophage functions by bile acids. Involved in bile acid promoted GLP1R secretion. This chain is G-protein coupled bile acid receptor 1 (Gpbar1), found in Mus musculus (Mouse).